The following is a 261-amino-acid chain: Hemin import ATP-binding protein HmuV (261 aa).

Residues 5–241 (YTAENLTFTR…DALAHWYGAQ (237 aa)) enclose the ABC transporter domain. 37–44 (GPNGAGKS) is an ATP binding site.

Belongs to the ABC transporter superfamily. Heme (hemin) importer (TC 3.A.1.14.5) family. The complex is composed of two ATP-binding proteins (HmuV), two transmembrane proteins (HmuU) and a solute-binding protein (HmuT).

The protein resides in the cell inner membrane. Part of the ABC transporter complex HmuTUV involved in hemin import. Responsible for energy coupling to the transport system. The sequence is that of Hemin import ATP-binding protein HmuV from Enterobacter cloacae.